The sequence spans 364 residues: MITAEKKKKNKFLPNFEKQSIYSLRYDEMQDWLVQNGQQKFRAKQIFEWLYEKRVDDIDDMTNLSKELREVLKDNFTMTTMTTVVKQESKDGTIKFLFELQDGYTIETVLMRHEYGNSVCVTTQVGCRIGCTFCASTLGGLKRNLEAGEIVSQVLTVQKALDETEERVSQIVIMGIGEPFENYDEMMDFLKIVNDDNGLNIGARHITVSTSGIIPRIYDFADEDIQINFAVSLHGANDEIRSRLMPINRAYNVEKLMEAIHYYQEKTNRRITFEYGLFGGVNDQIEHARELAHLIQELNCHVNLIPVNHVPERNYVKTPKEDIFKFEKELKRLGINATIRREQGADIDAACGQLRAKERKVETR.

The active-site Proton acceptor is Glu107. The region spanning His113 to Asp346 is the Radical SAM core domain. Cys120 and Cys351 are disulfide-bonded. 3 residues coordinate [4Fe-4S] cluster: Cys127, Cys131, and Cys134. Residues Gly177 to Glu178, Ser209, Ser232 to His234, and Asn308 each bind S-adenosyl-L-methionine. Cys351 (S-methylcysteine intermediate) is an active-site residue.

This sequence belongs to the radical SAM superfamily. RlmN family. The cofactor is [4Fe-4S] cluster.

It is found in the cytoplasm. It carries out the reaction adenosine(2503) in 23S rRNA + 2 reduced [2Fe-2S]-[ferredoxin] + 2 S-adenosyl-L-methionine = 2-methyladenosine(2503) in 23S rRNA + 5'-deoxyadenosine + L-methionine + 2 oxidized [2Fe-2S]-[ferredoxin] + S-adenosyl-L-homocysteine. The catalysed reaction is adenosine(37) in tRNA + 2 reduced [2Fe-2S]-[ferredoxin] + 2 S-adenosyl-L-methionine = 2-methyladenosine(37) in tRNA + 5'-deoxyadenosine + L-methionine + 2 oxidized [2Fe-2S]-[ferredoxin] + S-adenosyl-L-homocysteine. Its function is as follows. Specifically methylates position 2 of adenine 2503 in 23S rRNA and position 2 of adenine 37 in tRNAs. Confers resistance to some classes of antibiotics. The chain is Probable dual-specificity RNA methyltransferase RlmN from Staphylococcus saprophyticus subsp. saprophyticus (strain ATCC 15305 / DSM 20229 / NCIMB 8711 / NCTC 7292 / S-41).